Here is a 225-residue protein sequence, read N- to C-terminus: Futalosine hydrolase (225 aa).

Belongs to the PNP/UDP phosphorylase family. Futalosine hydrolase subfamily. Homotetramer.

The enzyme catalyses futalosine + H2O = dehypoxanthine futalosine + hypoxanthine. It participates in quinol/quinone metabolism; menaquinone biosynthesis. With respect to regulation, no enhancing of inhibitory effects are observed with divalent metal ions. Slightly inhibited by hypoxanthine. Catalyzes the hydrolysis of futalosine (FL) to dehypoxanthine futalosine (DHFL) and hypoxanthine, a step in the biosynthesis of menaquinone (MK, vitamin K2). Is highly specific to futalosine since it does not accept aminodeoxyfutalosine (AFL), or any structurally related nucleotides and nucleosides as substrate. The sequence is that of Futalosine hydrolase from Thermus thermophilus (strain ATCC 27634 / DSM 579 / HB8).